Here is a 437-residue protein sequence, read N- to C-terminus: UDP-N-acetylmuramate--L-alanine ligase (437 aa).

114–120 contacts ATP; that stretch reads GTHGKTS.

The protein belongs to the MurCDEF family.

It localises to the cytoplasm. It catalyses the reaction UDP-N-acetyl-alpha-D-muramate + L-alanine + ATP = UDP-N-acetyl-alpha-D-muramoyl-L-alanine + ADP + phosphate + H(+). The protein operates within cell wall biogenesis; peptidoglycan biosynthesis. In terms of biological role, cell wall formation. The protein is UDP-N-acetylmuramate--L-alanine ligase of Lactobacillus gasseri (strain ATCC 33323 / DSM 20243 / BCRC 14619 / CIP 102991 / JCM 1131 / KCTC 3163 / NCIMB 11718 / NCTC 13722 / AM63).